The primary structure comprises 202 residues: Small ribosomal subunit protein uS4c (202 aa).

The region spanning 90 to 153 (MRLDNIIFRL…KSEAIISKNI (64 aa)) is the S4 RNA-binding domain.

Belongs to the universal ribosomal protein uS4 family. As to quaternary structure, part of the 30S ribosomal subunit. Contacts protein S5. The interaction surface between S4 and S5 is involved in control of translational fidelity.

It localises to the plastid. The protein localises to the chloroplast. Its function is as follows. One of the primary rRNA binding proteins, it binds directly to 16S rRNA where it nucleates assembly of the body of the 30S subunit. In terms of biological role, with S5 and S12 plays an important role in translational accuracy. This is Small ribosomal subunit protein uS4c (rps4) from Leucodon sciuroides (Moss).